Here is a 261-residue protein sequence, read N- to C-terminus: Glucose 1-dehydrogenase 4 (261 aa).

11–35 (VITGGSTGLGRAMAVRFGQEEAKVV) is a binding site for NAD(+). Residue S145 coordinates substrate. Y158 acts as the Proton acceptor in catalysis.

This sequence belongs to the short-chain dehydrogenases/reductases (SDR) family. In terms of assembly, homotetramer.

It carries out the reaction D-glucose + NAD(+) = D-glucono-1,5-lactone + NADH + H(+). The enzyme catalyses D-glucose + NADP(+) = D-glucono-1,5-lactone + NADPH + H(+). The protein is Glucose 1-dehydrogenase 4 (gdhIV) of Priestia megaterium (Bacillus megaterium).